Here is a 187-residue protein sequence, read N- to C-terminus: Nuclear transcription factor Y subunit C-8 (187 aa).

The interval 163–187 (WPGAWTSVSGEEEEARGKKGGDDGN) is disordered. The segment covering 177–187 (ARGKKGGDDGN) has biased composition (basic and acidic residues).

The protein belongs to the NFYC/HAP5 subunit family. Heterotrimeric transcription factor composed of three components, NF-YA, NF-YB and NF-YC. NF-YB and NF-YC must interact and dimerize for NF-YA association and DNA binding. Expressed in flowers and siliques.

Its subcellular location is the nucleus. Stimulates the transcription of various genes by recognizing and binding to a CCAAT motif in promoters. The protein is Nuclear transcription factor Y subunit C-8 (NFYC8) of Arabidopsis thaliana (Mouse-ear cress).